The chain runs to 420 residues: S-adenosylmethionine synthase (420 aa).

An ATP-binding site is contributed by His16. Residue Asp18 coordinates Mg(2+). Glu44 serves as a coordination point for K(+). Positions 57 and 100 each coordinate L-methionine. A flexible loop region spans residues 100-110 (QSADIAQGVDK). Residues 175–177 (DGK), 251–252 (KF), Asp260, 266–267 (RK), Ala283, and Lys287 each bind ATP. Asp260 is a binding site for L-methionine. Lys291 contributes to the L-methionine binding site.

It belongs to the AdoMet synthase family. In terms of assembly, homotetramer; dimer of dimers. Requires Mg(2+) as cofactor. K(+) serves as cofactor.

It localises to the cytoplasm. The catalysed reaction is L-methionine + ATP + H2O = S-adenosyl-L-methionine + phosphate + diphosphate. It participates in amino-acid biosynthesis; S-adenosyl-L-methionine biosynthesis; S-adenosyl-L-methionine from L-methionine: step 1/1. Functionally, catalyzes the formation of S-adenosylmethionine (AdoMet) from methionine and ATP. The overall synthetic reaction is composed of two sequential steps, AdoMet formation and the subsequent tripolyphosphate hydrolysis which occurs prior to release of AdoMet from the enzyme. This is S-adenosylmethionine synthase from Trichodesmium erythraeum (strain IMS101).